The following is a 451-amino-acid chain: D-ribitol-5-phosphate cytidylyltransferase (451 aa).

Residues 1-29 form a disordered region; it reads MEAGPPGSARPAEPGPCLSGQRGADHTAS.

This sequence belongs to the IspD/TarI cytidylyltransferase family. IspD subfamily. Homodimer. In terms of tissue distribution, ubiquitously expressed, with high expression in brain.

Its subcellular location is the cytoplasm. The protein localises to the cytosol. It catalyses the reaction D-ribitol 5-phosphate + CTP + H(+) = CDP-L-ribitol + diphosphate. It carries out the reaction D-ribose 5-phosphate + CTP + H(+) = CDP-D-ribose + diphosphate. The enzyme catalyses D-ribulose 5-phosphate + CTP + H(+) = CDP-D-ribulose + diphosphate. The protein operates within protein modification; protein glycosylation. Its function is as follows. Cytidylyltransferase required for protein O-linked mannosylation. Catalyzes the formation of CDP-ribitol nucleotide sugar from D-ribitol 5-phosphate. CDP-ribitol is a substrate of FKTN during the biosynthesis of the phosphorylated O-mannosyl trisaccharide (N-acetylgalactosamine-beta-3-N-acetylglucosamine-beta-4-(phosphate-6-)mannose), a carbohydrate structure present in alpha-dystroglycan (DAG1), which is required for binding laminin G-like domain-containing extracellular proteins with high affinity. Shows activity toward other pentose phosphate sugars and mediates formation of CDP-ribulose or CDP-ribose using CTP and ribulose-5-phosphate or ribose-5-phosphate, respectively. Not Involved in dolichol production. This chain is D-ribitol-5-phosphate cytidylyltransferase, found in Homo sapiens (Human).